A 295-amino-acid polypeptide reads, in one-letter code: Ethanolamine ammonia-lyase small subunit (295 aa).

Adenosylcob(III)alamin is bound by residues Val-207, Glu-228, and Cys-258.

The protein belongs to the EutC family. In terms of assembly, the basic unit is a heterodimer which dimerizes to form tetramers. The heterotetramers trimerize; 6 large subunits form a core ring with 6 small subunits projecting outwards. Adenosylcob(III)alamin serves as cofactor.

It localises to the bacterial microcompartment. It carries out the reaction ethanolamine = acetaldehyde + NH4(+). It functions in the pathway amine and polyamine degradation; ethanolamine degradation. In terms of biological role, catalyzes the deamination of various vicinal amino-alcohols to oxo compounds. Allows this organism to utilize ethanolamine as the sole source of nitrogen and carbon in the presence of external vitamin B12. The protein is Ethanolamine ammonia-lyase small subunit of Shigella sonnei (strain Ss046).